The following is a 93-amino-acid chain: Parbolysin P1 (93 aa).

Cystine bridges form between cysteine 16-cysteine 37, cysteine 22-cysteine 33, and cysteine 47-cysteine 60.

This sequence belongs to the worm cytolysin family. Localized within the skin and proboscis and are most readily isolated from body mucus secretions.

The protein resides in the secreted. Cytolysin that shows hemolytic activity (on bovine erythrocytes, HC(50)=5.75 mg/ml). This hemolytic activity is completely inhibited by small unilamelar vesicles composed of PC/PG, PC/PI and PC/PS in 1:1 molar ratios (with at least 100 mg/ml concentration). The recombinant protein does not show hemolytic activity, suggesting that it is not properly folded or that it requires a free N-terminal end for its activity. The protein is Parbolysin P1 of Parborlasia corrugatus (Antarctic nemertean worm).